The following is a 259-amino-acid chain: Ribosomal RNA small subunit methyltransferase J (259 aa).

Residues 101–102 (RD), 117–118 (ER), 153–154 (SS), and D176 contribute to the S-adenosyl-L-methionine site.

This sequence belongs to the methyltransferase superfamily. RsmJ family.

It localises to the cytoplasm. The catalysed reaction is guanosine(1516) in 16S rRNA + S-adenosyl-L-methionine = N(2)-methylguanosine(1516) in 16S rRNA + S-adenosyl-L-homocysteine + H(+). Its function is as follows. Specifically methylates the guanosine in position 1516 of 16S rRNA. This is Ribosomal RNA small subunit methyltransferase J from Vibrio campbellii (strain ATCC BAA-1116).